A 534-amino-acid chain; its full sequence is Ankyrin repeat and LEM domain-containing protein 1 (534 aa).

ANK repeat units follow at residues 4–35 (TACL…DPNL), 39–71 (DGAA…DPNA), 75–104 (EGLT…DPTL), and 108–137 (DGLR…PTQP). One can recognise an LEM domain in the interval 279–323 (HSSVPPMSDLQLLQALRALGYSPGPVTPFTRGHYLRRLQEAQASR). Residues 370 to 485 (KSSFTYLLLD…ALGLQTLTNQ (116 aa)) form the GIY-YIG domain. The Nuclear localization signal motif lies at 498 to 505 (PPSRRRRL).

In terms of assembly, interacts (via LEM domain) with BANF1; the interaction may favor BANF1 dimerization. In terms of tissue distribution, predominantly expressed in bone marrow, spleen, thymus, colon and ovary. Expressed also to a lesser extent in lymph nodes, liver and testis.

The protein localises to the cytoplasm. It localises to the nucleus. Endonuclease that probably plays a role in the DNA damage response and DNA repair. This Mus musculus (Mouse) protein is Ankyrin repeat and LEM domain-containing protein 1.